The primary structure comprises 419 residues: D-mannonate dehydratase (419 aa).

N54 and H139 together coordinate substrate. Residue Y176 is the Proton donor/acceptor of the active site. Mg(2+) is bound at residue D227. Residue H229 is the Proton donor/acceptor of the active site. Residues E253 and E279 each coordinate Mg(2+). Residues E279, R300, H329, D333, and E356 each contribute to the substrate site.

The protein belongs to the mandelate racemase/muconate lactonizing enzyme family. GalD subfamily. It depends on Mg(2+) as a cofactor.

It catalyses the reaction D-mannonate = 2-dehydro-3-deoxy-D-gluconate + H2O. The protein operates within carbohydrate metabolism; pentose and glucuronate interconversion. Catalyzes the dehydration of D-mannonate. Has no detectable activity with a panel of 70 other acid sugars (in vitro). In Xanthomonas oryzae pv. oryzicola (strain BLS256), this protein is D-mannonate dehydratase.